The following is a 355-amino-acid chain: MFDKIEELEIRYQELESLLAVPTVIANQPEFRKLSREHNDLTGLVEAYRRYKKVLAEIEGNRELLADPEMKEMAEAELEDLERQQEELEGEIKLLLLPKDPNDDRNVILEIRAGTGGDESALFAGDLFRMYSRFAERNRWKVEVMSASESERGGFKEVVALIEGQAVFAKLKYESGTHRVQRVPETEAQGRIHTSACTVAVLPEAEDIEIDINPVDLKIDVYRASGAGGQHVNKTESAVRITHLPTGIVVECQDERSQIKNRSKAMKVLKSRILDGLQQEQNARIAADRKQQVGSGDRSERIRTYNFPQGRMTDHRIGLTLYRLDALMEGDIAEVVDSLRAHYQMEALKAQAEAA.

Gln-230 is modified (N5-methylglutamine).

It belongs to the prokaryotic/mitochondrial release factor family. Post-translationally, methylated by PrmC. Methylation increases the termination efficiency of RF1.

Its subcellular location is the cytoplasm. In terms of biological role, peptide chain release factor 1 directs the termination of translation in response to the peptide chain termination codons UAG and UAA. The chain is Peptide chain release factor 1 from Geobacter metallireducens (strain ATCC 53774 / DSM 7210 / GS-15).